A 180-amino-acid chain; its full sequence is Transmembrane protein 190 (180 aa).

An N-terminal signal peptide occupies residues 1-21; the sequence is MVGSGIPALGLLLLMQGSADG. The Extracellular segment spans residues 22-81; that stretch reads NGIQGFFYPWSCEGDVWDRESCGGQAAIENPNLCLRLRCCYRDGVCYHQRPDENMRRKHM. The P-type domain maps to 31 to 71; that stretch reads WSCEGDVWDRESCGGQAAIENPNLCLRLRCCYRDGVCYHQR. Cystine bridges form between C33–C61, C43–C60, and C55–C67. Residues 82–102 traverse the membrane as a helical segment; that stretch reads WALGWTCGGLLFLITSICLFW. The Cytoplasmic segment spans residues 103 to 180; sequence WARRHDMLRL…EETEGGDEDD (78 aa). A compositionally biased stretch (basic and acidic residues) spans 131–140; the sequence is KDRTPSEKKT. The tract at residues 131-180 is disordered; that stretch reads KDRTPSEKKTPSVGSIPPAAPTEGALDVSGGTEGEGTEGGEETEGGDEDD. The span at 165 to 180 shows a compositional bias: acidic residues; it reads EGTEGGEETEGGDEDD.

The protein localises to the membrane. This chain is Transmembrane protein 190 (TMEM190), found in Bos taurus (Bovine).